Consider the following 117-residue polypeptide: Large ribosomal subunit protein eL34 (117 aa).

Ser12 carries the post-translational modification Phosphoserine. Residues Lys36 and Lys43 each carry the N6-acetyllysine modification. Lys108 participates in a covalent cross-link: Glycyl lysine isopeptide (Lys-Gly) (interchain with G-Cter in SUMO2).

The protein belongs to the eukaryotic ribosomal protein eL34 family. Component of the large ribosomal subunit.

It is found in the cytoplasm. It localises to the cytosol. The protein localises to the endoplasmic reticulum. Its function is as follows. Component of the large ribosomal subunit. The ribosome is a large ribonucleoprotein complex responsible for the synthesis of proteins in the cell. The chain is Large ribosomal subunit protein eL34 (Rpl34) from Rattus norvegicus (Rat).